Reading from the N-terminus, the 441-residue chain is GTPase Der (441 aa).

2 EngA-type G domains span residues 4 to 169 (PIVA…PEGS) and 178 to 353 (PKVA…DAQT). GTP contacts are provided by residues 10-17 (GRPNVGKS), 57-61 (DTGGI), 120-123 (NKVD), 184-191 (GKPNVGKS), 231-235 (DTAGL), and 296-299 (NKWD). The region spanning 354-438 (MRIPTGVLNE…SIRFINRERK (85 aa)) is the KH-like domain.

This sequence belongs to the TRAFAC class TrmE-Era-EngA-EngB-Septin-like GTPase superfamily. EngA (Der) GTPase family. Associates with the 50S ribosomal subunit.

In terms of biological role, GTPase that plays an essential role in the late steps of ribosome biogenesis. In Lachnospira eligens (strain ATCC 27750 / DSM 3376 / VPI C15-48 / C15-B4) (Eubacterium eligens), this protein is GTPase Der.